Reading from the N-terminus, the 385-residue chain is S-adenosylmethionine synthase (385 aa).

H16 contacts ATP. D18 contacts Mg(2+). E44 contacts K(+). The L-methionine site is built by E57 and Q100. Positions 100–110 (QSPDINQGVDR) are flexible loop. Residues 164–166 (DGK), 230–231 (KF), D239, 245–246 (RK), A262, and K266 contribute to the ATP site. L-methionine is bound at residue D239. K270 provides a ligand contact to L-methionine.

Belongs to the AdoMet synthase family. Homotetramer; dimer of dimers. Requires Mg(2+) as cofactor. The cofactor is K(+).

The protein resides in the cytoplasm. The enzyme catalyses L-methionine + ATP + H2O = S-adenosyl-L-methionine + phosphate + diphosphate. It functions in the pathway amino-acid biosynthesis; S-adenosyl-L-methionine biosynthesis; S-adenosyl-L-methionine from L-methionine: step 1/1. Functionally, catalyzes the formation of S-adenosylmethionine (AdoMet) from methionine and ATP. The overall synthetic reaction is composed of two sequential steps, AdoMet formation and the subsequent tripolyphosphate hydrolysis which occurs prior to release of AdoMet from the enzyme. The chain is S-adenosylmethionine synthase from Helicobacter acinonychis (strain Sheeba).